Consider the following 1177-residue polypeptide: Zinc finger CCCH domain-containing protein 6 (1177 aa).

Residues Met1–Glu12 are compositionally biased toward basic and acidic residues. Disordered regions lie at residues Met1–Tyr137 and Gln179–Arg206. Over residues Asp13–Asp31 the composition is skewed to acidic residues. A coiled-coil region spans residues Glu27–Asn73. Positions Gln32–Tyr46 are enriched in basic and acidic residues. Residues Arg47–Asn73 show a composition bias toward basic residues. Positions Gln179–Lys188 are enriched in low complexity. 3 consecutive C3H1-type zinc fingers follow at residues Lys271–Glu297, Glu299–Phe326, and Pro327–Leu350. Residues His347–Gly383 adopt a coiled-coil conformation. 8 disordered regions span residues Gly383–Asp416, Pro446–Gln587, Gln622–Gly654, Arg670–His767, Pro780–Glu826, Glu942–Ser988, Asp1043–Gly1101, and Leu1132–Leu1162. Positions His493 to Cys502 are enriched in low complexity. Polar residues-rich tracts occupy residues Glu512–Glu522 and Ser564–Gln587. The segment covering Arg713–Pro728 has biased composition (polar residues). The span at Pro753–His767 shows a compositional bias: basic and acidic residues. Over residues Gly955–Leu967 the composition is skewed to basic and acidic residues. 2 stretches are compositionally biased toward polar residues: residues Leu1050–Thr1064 and Lys1077–Ala1093. At Ser1150 the chain carries Phosphoserine.

The chain is Zinc finger CCCH domain-containing protein 6 (Zc3h6) from Mus musculus (Mouse).